We begin with the raw amino-acid sequence, 177 residues long: Bifunctional protein PyrR (177 aa).

The PRPP-binding signature appears at 99-111; sequence VVLVDDVLFTGRT.

This sequence belongs to the purine/pyrimidine phosphoribosyltransferase family. PyrR subfamily.

It catalyses the reaction UMP + diphosphate = 5-phospho-alpha-D-ribose 1-diphosphate + uracil. In terms of biological role, regulates the transcription of the pyrimidine nucleotide (pyr) operon in response to exogenous pyrimidines. Its function is as follows. Also displays a weak uracil phosphoribosyltransferase activity which is not physiologically significant. The protein is Bifunctional protein PyrR of Geobacter sulfurreducens (strain ATCC 51573 / DSM 12127 / PCA).